Consider the following 229-residue polypeptide: Ribosome maturation factor RimM (229 aa).

Positions 1–37 (MAGHDSGNAKRGRSPSFGVFVRKPVERTSAKGTSDGA) are disordered. The PRC barrel domain maps to 148–229 (ADEFYWVDLI…RVVVDWEADY (82 aa)).

The protein belongs to the RimM family. As to quaternary structure, binds ribosomal protein uS19.

The protein resides in the cytoplasm. An accessory protein needed during the final step in the assembly of 30S ribosomal subunit, possibly for assembly of the head region. Essential for efficient processing of 16S rRNA. May be needed both before and after RbfA during the maturation of 16S rRNA. It has affinity for free ribosomal 30S subunits but not for 70S ribosomes. The protein is Ribosome maturation factor RimM of Burkholderia pseudomallei (strain 668).